A 258-amino-acid polypeptide reads, in one-letter code: Small ribosomal subunit protein mS40 (258 aa).

Residues 1–35 constitute a mitochondrion transit peptide; the sequence is MAASVLNVLLRRLPYFSPFRGAYGVQVPLQTLCTK. Phosphoserine is present on Ser-49. The tract at residues 221-258 is disordered; the sequence is QGHLREESGPPPESMPKVPLTAPNEATSTEQAGPQSAL. Positions 244–258 are enriched in polar residues; the sequence is NEATSTEQAGPQSAL.

The protein belongs to the bacterial ribosomal protein bS18 family. Mitochondrion-specific ribosomal protein mS40 subfamily. Component of the mitochondrial ribosome small subunit (28S) which comprises a 12S rRNA and about 30 distinct proteins.

The protein localises to the mitochondrion. This is Small ribosomal subunit protein mS40 from Bos taurus (Bovine).